Reading from the N-terminus, the 309-residue chain is uncharacterized protein (309 aa).

Pro residues-rich tracts occupy residues 1–17 and 24–51; these read MTSR…PSPP and SPVP…PTPR. Disordered stretches follow at residues 1–174 and 216–240; these read MTSR…PPGV and PPDL…PLHA. A compositionally biased stretch (low complexity) spans 67-83; sequence LRSSPSSALNASRGAPS. Positions 84-112 are enriched in pro residues; sequence TSPPPSSSPPSSPASTPPSRTPSPTPTAP. Composition is skewed to low complexity over residues 113-125 and 135-144; these read ASPV…TPAS and APSSSAALSS. Residues 160 to 174 are compositionally biased toward pro residues; the sequence is PPPPLPPPLQPPPGV. The helical transmembrane segment at 278-298 threads the bilayer; sequence LFLLFTLLSIHFSPFPIFILL.

Its subcellular location is the host membrane. This is an uncharacterized protein from Vitis vinifera (Grape).